The chain runs to 441 residues: Xaa-Pro dipeptidase (441 aa).

Positions 244, 255, 336, 381, and 420 each coordinate Mn(2+).

It belongs to the peptidase M24B family. Bacterial-type prolidase subfamily. The cofactor is Mn(2+).

It catalyses the reaction Xaa-L-Pro dipeptide + H2O = an L-alpha-amino acid + L-proline. In terms of biological role, splits dipeptides with a prolyl residue in the C-terminal position. This chain is Xaa-Pro dipeptidase, found in Xanthomonas oryzae pv. oryzae (strain MAFF 311018).